Here is a 76-residue protein sequence, read N- to C-terminus: Esculentin-2-ALb (76 aa).

The first 22 residues, 1-22 (MFTMKKSLLLLFFLGTISLSLC), serve as a signal peptide directing secretion. Residues 23-39 (EEERSADEDDGEKGVKR) constitute a propeptide that is removed on maturation. Residues Cys-70 and Cys-76 are joined by a disulfide bond.

In terms of tissue distribution, expressed by the skin glands.

It is found in the secreted. In terms of biological role, antimicrobial peptide with activity against Gram-positive and Gram-negative bacteria and against fungi. Has been tested against S.aureus (MIC=1.25 ug/mL), B.pumilus (MIC=2.5 ug/mL), B.cereus (MIC=7.5 ug/mL), E.coli (MIC=12.5 ug/mL), B.dysenteriae (MIC=7.5 ug/mL), A.cacoaceticus (MIC=12.5 ug/mL), P.aeruginosa (MIC=50.0 ug/mL) and C.albicans (MIC=2.5 ug/mL). Also shows a weak hemolytic activity. The protein is Esculentin-2-ALb of Amolops loloensis (Lolokou Sucker Frog).